Consider the following 354-residue polypeptide: Chorismate synthase (354 aa).

Residue Arg-48 coordinates NADP(+). FMN-binding positions include 125 to 127 (RAS), Gly-277, 292 to 296 (KPIPS), and Arg-318.

This sequence belongs to the chorismate synthase family. Homotetramer. FMNH2 is required as a cofactor.

It carries out the reaction 5-O-(1-carboxyvinyl)-3-phosphoshikimate = chorismate + phosphate. The protein operates within metabolic intermediate biosynthesis; chorismate biosynthesis; chorismate from D-erythrose 4-phosphate and phosphoenolpyruvate: step 7/7. In terms of biological role, catalyzes the anti-1,4-elimination of the C-3 phosphate and the C-6 proR hydrogen from 5-enolpyruvylshikimate-3-phosphate (EPSP) to yield chorismate, which is the branch point compound that serves as the starting substrate for the three terminal pathways of aromatic amino acid biosynthesis. This reaction introduces a second double bond into the aromatic ring system. This chain is Chorismate synthase, found in Nitratidesulfovibrio vulgaris (strain ATCC 29579 / DSM 644 / CCUG 34227 / NCIMB 8303 / VKM B-1760 / Hildenborough) (Desulfovibrio vulgaris).